An 89-amino-acid polypeptide reads, in one-letter code: Small ribosomal subunit protein uS15 (89 aa).

The protein belongs to the universal ribosomal protein uS15 family. In terms of assembly, part of the 30S ribosomal subunit. Forms a bridge to the 50S subunit in the 70S ribosome, contacting the 23S rRNA.

One of the primary rRNA binding proteins, it binds directly to 16S rRNA where it helps nucleate assembly of the platform of the 30S subunit by binding and bridging several RNA helices of the 16S rRNA. Functionally, forms an intersubunit bridge (bridge B4) with the 23S rRNA of the 50S subunit in the ribosome. The polypeptide is Small ribosomal subunit protein uS15 (Exiguobacterium sp. (strain ATCC BAA-1283 / AT1b)).